Consider the following 160-residue polypeptide: Lipoprotein signal peptidase (160 aa).

Helical transmembrane passes span 13–33 (IYITTIIFILILDISSKRLII), 72–92 (WFLSTVSMLTILVMTRIITKL), and 104–124 (SLIIAGATGNLIDRIFYGFVV). Residues Asp125 and Asp143 contribute to the active site. A helical membrane pass occupies residues 134–154 (WHFATFNIADCSIFIGIIILM).

This sequence belongs to the peptidase A8 family.

The protein resides in the cell inner membrane. The catalysed reaction is Release of signal peptides from bacterial membrane prolipoproteins. Hydrolyzes -Xaa-Yaa-Zaa-|-(S,diacylglyceryl)Cys-, in which Xaa is hydrophobic (preferably Leu), and Yaa (Ala or Ser) and Zaa (Gly or Ala) have small, neutral side chains.. Its pathway is protein modification; lipoprotein biosynthesis (signal peptide cleavage). In terms of biological role, this protein specifically catalyzes the removal of signal peptides from prolipoproteins. The chain is Lipoprotein signal peptidase from Buchnera aphidicola subsp. Acyrthosiphon pisum (strain 5A).